A 235-amino-acid chain; its full sequence is Small ribosomal subunit protein uS3 (235 aa).

Positions 39–107 (IRQYVFKALP…DVSLNIVEIR (69 aa)) constitute a KH type-2 domain.

It belongs to the universal ribosomal protein uS3 family. As to quaternary structure, part of the 30S ribosomal subunit. Forms a tight complex with proteins S10 and S14.

Functionally, binds the lower part of the 30S subunit head. Binds mRNA in the 70S ribosome, positioning it for translation. This Sphingopyxis alaskensis (strain DSM 13593 / LMG 18877 / RB2256) (Sphingomonas alaskensis) protein is Small ribosomal subunit protein uS3.